A 240-amino-acid chain; its full sequence is 1-acyl-sn-glycerol-3-phosphate acyltransferase (240 aa).

Positions 73–78 (HQNNYD) match the HXXXXD motif motif.

It belongs to the 1-acyl-sn-glycerol-3-phosphate acyltransferase family.

It is found in the cell inner membrane. The enzyme catalyses a 1-acyl-sn-glycero-3-phosphate + an acyl-CoA = a 1,2-diacyl-sn-glycero-3-phosphate + CoA. It functions in the pathway phospholipid metabolism; CDP-diacylglycerol biosynthesis; CDP-diacylglycerol from sn-glycerol 3-phosphate: step 2/3. Functionally, converts lysophosphatidic acid (LPA) into phosphatidic acid by incorporating acyl moiety at the 2 position. The protein is 1-acyl-sn-glycerol-3-phosphate acyltransferase (plsC) of Haemophilus influenzae (strain ATCC 51907 / DSM 11121 / KW20 / Rd).